A 424-amino-acid polypeptide reads, in one-letter code: Chitinase CLP (424 aa).

A signal peptide spans 1 to 18 (MSLHLLLAVSLCVALASS). The Peptidase A1 domain maps to 43-405 (AATSLYTVPI…DEEKQRLGFS (363 aa)). N139, N345, and N419 each carry an N-linked (GlcNAc...) asparagine glycan.

The protein belongs to the peptidase A1 family. Expressed in roots. Expressed at low levels in leaf sheaths, stems and flowers.

The protein localises to the secreted. It localises to the extracellular space. The protein resides in the apoplast. The catalysed reaction is Random endo-hydrolysis of N-acetyl-beta-D-glucosaminide (1-&gt;4)-beta-linkages in chitin and chitodextrins.. In terms of biological role, chitinase that possesses antifungal activity. Inhibits the growth of the fungal pathogen Rhizoctonia solani by degrading the fungal cell wall. Does not possess inhibiting activity against fungal endo-1,4-beta-D-xylanases belonging to glycoside hydrolase family 10 (GH10) and family 11 (GH11). Involved in the regulation of plant growth by regulating the intracellular calcium ion concentration in roots. In Oryza sativa subsp. japonica (Rice), this protein is Chitinase CLP.